The sequence spans 120 residues: Chaperonin GroEL (120 aa).

23-27 (DGTTT) contributes to the ATP binding site.

This sequence belongs to the chaperonin (HSP60) family. In terms of assembly, forms a cylinder of 14 subunits composed of two heptameric rings stacked back-to-back. Interacts with the co-chaperonin GroES.

The protein localises to the cytoplasm. The enzyme catalyses ATP + H2O + a folded polypeptide = ADP + phosphate + an unfolded polypeptide.. In terms of biological role, together with its co-chaperonin GroES, plays an essential role in assisting protein folding. The GroEL-GroES system forms a nano-cage that allows encapsulation of the non-native substrate proteins and provides a physical environment optimized to promote and accelerate protein folding. This is Chaperonin GroEL from Mycolicibacterium vaccae (Mycobacterium vaccae).